A 258-amino-acid chain; its full sequence is Archaerhodopsin-3 (258 aa).

The propeptide occupies 1–6 (MDPIAL). Gln7 is modified (pyrrolidone carboxylic acid). Topologically, residues 7-18 (QAGYDLLGDGRP) are extracellular. The helical transmembrane segment at 19–40 (ETLWLGIGTLLMLIGTFYFLVR) threads the bilayer. Topologically, residues 41-49 (GWGVTDKDA) are cytoplasmic. The helical transmembrane segment at 50 to 71 (REYYAVTILVPGIASAAYLSMF) threads the bilayer. The Extracellular portion of the chain corresponds to 72-89 (FGIGLTEVTVGGEMLDIY). The chain crosses the membrane as a helical span at residues 90–111 (YARYADWLFTTPLLLLDLALLA). Over 112-114 (KVD) the chain is Cytoplasmic. Residues 115–137 (RVTIGTLVGVDALMIVTGLIGAL) form a helical membrane-spanning segment. The Extracellular portion of the chain corresponds to 138–141 (SHTA). Residues 142–170 (IARYSWWLFSTICMIVVLYFLATSLRSAA) form a helical membrane-spanning segment. Residues 171-173 (KER) lie on the Cytoplasmic side of the membrane. A helical membrane pass occupies residues 174 to 202 (GPEVASTFNTLTALVLVLWTAYPILWIIG). Residues 203–210 (TEGAGVVG) are Extracellular-facing. The chain crosses the membrane as a helical span at residues 211 to 243 (LGIETLLFMVLDVTAKVGFGFILLRSRAILGDT). N6-(retinylidene)lysine is present on Lys226. The Cytoplasmic portion of the chain corresponds to 244 to 258 (EAPEPSAGADVSAAD).

This sequence belongs to the archaeal/bacterial/fungal opsin family.

The protein localises to the cell membrane. In terms of biological role, light-driven proton pump. This Halorubrum sodomense protein is Archaerhodopsin-3 (aop3).